The following is a 152-amino-acid chain: Transcriptional regulator MraZ (152 aa).

SpoVT-AbrB domains lie at 5–52 (ATLV…PLPE) and 81–124 (ASEC…DETT).

Belongs to the MraZ family. As to quaternary structure, dodecamer.

It localises to the cytoplasm. The protein resides in the nucleoid. Functionally, negatively regulates its own expression and that of the subsequent genes in the proximal part of the division and cell wall (dcw) gene cluster. Acts by binding directly to DNA. May also regulate the expression of genes outside the dcw cluster. The chain is Transcriptional regulator MraZ from Escherichia coli (strain K12).